Reading from the N-terminus, the 456-residue chain is NAD-dependent deacetylase sir2C (456 aa).

Positions 161-443 (IEIENNKIKE…LNLSKLLNWD (283 aa)) constitute a Deacetylase sirtuin-type domain. His294 serves as the catalytic Proton acceptor. Cys302, Cys305, Cys331, and Cys336 together coordinate Zn(2+).

It belongs to the sirtuin family. Requires Zn(2+) as cofactor.

It carries out the reaction N(6)-acetyl-L-lysyl-[protein] + NAD(+) + H2O = 2''-O-acetyl-ADP-D-ribose + nicotinamide + L-lysyl-[protein]. Functionally, NAD-dependent deacetylase, which plays an important role in the regulation of transcriptional repression. The polypeptide is NAD-dependent deacetylase sir2C (sir2C) (Dictyostelium discoideum (Social amoeba)).